The chain runs to 207 residues: 2,3-bisphosphoglycerate-dependent phosphoglycerate mutase (207 aa).

Residues 9–16 (RHGQSDWN), 22–23 (TG), R61, 88–91 (ERDY), K99, 115–116 (RR), and 159–160 (GN) contribute to the substrate site. The Tele-phosphohistidine intermediate role is filled by H10. The Proton donor/acceptor role is filled by E88.

This sequence belongs to the phosphoglycerate mutase family. BPG-dependent PGAM subfamily. In terms of assembly, homodimer.

It catalyses the reaction (2R)-2-phosphoglycerate = (2R)-3-phosphoglycerate. It functions in the pathway carbohydrate degradation; glycolysis; pyruvate from D-glyceraldehyde 3-phosphate: step 3/5. Catalyzes the interconversion of 2-phosphoglycerate and 3-phosphoglycerate. The polypeptide is 2,3-bisphosphoglycerate-dependent phosphoglycerate mutase (Beijerinckia indica subsp. indica (strain ATCC 9039 / DSM 1715 / NCIMB 8712)).